We begin with the raw amino-acid sequence, 260 residues long: Exosome complex component Rrp42 (260 aa).

Belongs to the RNase PH family. Rrp42 subfamily. As to quaternary structure, component of the archaeal exosome complex. Forms a hexameric ring-like arrangement composed of 3 Rrp41-Rrp42 heterodimers. The hexameric ring associates with a trimer of Rrp4 and/or Csl4 subunits.

It is found in the cytoplasm. In terms of biological role, non-catalytic component of the exosome, which is a complex involved in RNA degradation. Contributes to the structuring of the Rrp41 active site. In Thermoplasma volcanium (strain ATCC 51530 / DSM 4299 / JCM 9571 / NBRC 15438 / GSS1), this protein is Exosome complex component Rrp42.